The chain runs to 442 residues: GTPase Der (442 aa).

2 EngA-type G domains span residues 2–167 (RTIA…PIQN) and 175–351 (FKFC…EQAM). GTP contacts are provided by residues 8–15 (GKPNVGKS), 55–59 (DTGGI), 119–122 (NKVE), 181–188 (GRPNVGKS), 228–232 (DTAGV), and 293–296 (NKWD). The 85-residue stretch at 352–436 (RKVATSLLND…PITLYWQDKN (85 aa)) folds into the KH-like domain.

This sequence belongs to the TRAFAC class TrmE-Era-EngA-EngB-Septin-like GTPase superfamily. EngA (Der) GTPase family. In terms of assembly, associates with the 50S ribosomal subunit.

Functionally, GTPase that plays an essential role in the late steps of ribosome biogenesis. This is GTPase Der from Ureaplasma urealyticum serovar 10 (strain ATCC 33699 / Western).